The sequence spans 642 residues: Chaperone protein DnaK (642 aa).

Position 198 is a phosphothreonine; by autocatalysis (Thr-198). Residues 602–642 (EAAGGAEAEAAAGGHGGASGSHDDKVVDADFEEVDGDKKGK) are disordered. Positions 603 to 613 (AAGGAEAEAAA) are enriched in low complexity.

The protein belongs to the heat shock protein 70 family.

Acts as a chaperone. In Paramagnetospirillum magneticum (strain ATCC 700264 / AMB-1) (Magnetospirillum magneticum), this protein is Chaperone protein DnaK.